The primary structure comprises 260 residues: Small ribosomal subunit protein uS2 (260 aa).

This sequence belongs to the universal ribosomal protein uS2 family.

This is Small ribosomal subunit protein uS2 from Streptococcus sanguinis (strain SK36).